Here is a 1155-residue protein sequence, read N- to C-terminus: Cilia- and flagella-associated protein 251 (1155 aa).

2 stretches are compositionally biased toward basic and acidic residues: residues 1–19 (MSDAEEAPREATRENGETE) and 31–59 (KEVEDPQQESKDDTLAWRESQEEERKTGE). Disordered regions lie at residues 1–144 (MSDA…KLSL) and 167–225 (LDQI…DIQS). Over residues 60 to 69 (EEGEEEEEKE) the composition is skewed to acidic residues. Positions 70–95 (EEGKKDKKIVMEETEEKAGESQEKEA) are enriched in basic and acidic residues. Low complexity predominate over residues 99–111 (QEETTVEPQEVTE). Composition is skewed to polar residues over residues 118–128 (TQITDSQSVTS) and 172–182 (PEEQQISSPER). Basic and acidic residues predominate over residues 201–220 (GQERRDLEPENREEGQERTV). WD repeat units follow at residues 341-383 (PVHT…IWKW), 391-431 (ACTL…AWYE), 442-481 (LLTEKTFNKLVGKFSQSVFHLNLTQILSATMEGKLVVWDI), 499-534 (PCKLVHLQKEGITVLTTTDSYIVTGDIKGNIKFYDH), 537-597 (SIVN…VYHL), 601-641 (GTKL…VWNY), 647-684 (LFSRVFEKGLGVQSLTYNPEGALLGAGFTEGTVYILDA), 694-730 (PFKYSRTSVTHISFSHDSQYMATADRSFTVAVYMLVV), 737-780 (WEYL…GYDL), 791-831 (LDIH…LFNA), 837-883 (RKTL…ILPV), 889-927 (KTSAIVCHPNGVAGMAVSYDGHYAFTAGGHDRSVVQWKI), 965-1005 (YFYY…FYPS), and 1025-1065 (GKLI…GYTN).

The protein localises to the cytoplasm. Its subcellular location is the cytoskeleton. The protein resides in the cilium axoneme. It is found in the cell projection. It localises to the cilium. The protein localises to the flagellum. In terms of biological role, involved in spermatozoa motility. May also regulate cilium motility through its role in the assembly of the axonemal radial spokes. The protein is Cilia- and flagella-associated protein 251 of Pongo abelii (Sumatran orangutan).